A 245-amino-acid polypeptide reads, in one-letter code: Pyridoxine 5'-phosphate synthase (245 aa).

Position 9 (N9) interacts with 3-amino-2-oxopropyl phosphate. 11–12 (DH) contributes to the 1-deoxy-D-xylulose 5-phosphate binding site. Residue R20 participates in 3-amino-2-oxopropyl phosphate binding. Residue H45 is the Proton acceptor of the active site. Residues R47 and H52 each coordinate 1-deoxy-D-xylulose 5-phosphate. The Proton acceptor role is filled by E72. Residue T102 participates in 1-deoxy-D-xylulose 5-phosphate binding. H193 acts as the Proton donor in catalysis. 3-amino-2-oxopropyl phosphate is bound by residues G194 and 215–216 (GH).

The protein belongs to the PNP synthase family. Homooctamer; tetramer of dimers.

It localises to the cytoplasm. It catalyses the reaction 3-amino-2-oxopropyl phosphate + 1-deoxy-D-xylulose 5-phosphate = pyridoxine 5'-phosphate + phosphate + 2 H2O + H(+). It functions in the pathway cofactor biosynthesis; pyridoxine 5'-phosphate biosynthesis; pyridoxine 5'-phosphate from D-erythrose 4-phosphate: step 5/5. Its function is as follows. Catalyzes the complicated ring closure reaction between the two acyclic compounds 1-deoxy-D-xylulose-5-phosphate (DXP) and 3-amino-2-oxopropyl phosphate (1-amino-acetone-3-phosphate or AAP) to form pyridoxine 5'-phosphate (PNP) and inorganic phosphate. In Shewanella oneidensis (strain ATCC 700550 / JCM 31522 / CIP 106686 / LMG 19005 / NCIMB 14063 / MR-1), this protein is Pyridoxine 5'-phosphate synthase.